Reading from the N-terminus, the 703-residue chain is DNA ligase (703 aa).

Residues 44-48, 93-94, and E127 contribute to the NAD(+) site; these read DAEYD and SL. The N6-AMP-lysine intermediate role is filled by K129. Positions 150, 186, 302, and 326 each coordinate NAD(+). C420, C422, C444, and C450 together coordinate Zn(2+). A BRCT domain is found at 625–703; it reads VADSPVAGKT…EDMWFQRIGA (79 aa).

It belongs to the NAD-dependent DNA ligase family. LigA subfamily. The cofactor is Mg(2+). Requires Mn(2+) as cofactor.

The catalysed reaction is NAD(+) + (deoxyribonucleotide)n-3'-hydroxyl + 5'-phospho-(deoxyribonucleotide)m = (deoxyribonucleotide)n+m + AMP + beta-nicotinamide D-nucleotide.. In terms of biological role, DNA ligase that catalyzes the formation of phosphodiester linkages between 5'-phosphoryl and 3'-hydroxyl groups in double-stranded DNA using NAD as a coenzyme and as the energy source for the reaction. It is essential for DNA replication and repair of damaged DNA. The sequence is that of DNA ligase from Chelativorans sp. (strain BNC1).